The following is a 296-amino-acid chain: Cation-efflux pump FieF (296 aa).

Residues 1-18 are Cytoplasmic-facing; the sequence is MTQTSQYDFWVKLASRAS. A helical membrane pass occupies residues 19 to 32; it reads VATALTLITIKLLA. At 33-43 the chain is on the periplasmic side; it reads WLYSGSASMLA. The helical transmembrane segment at 44-60 threads the bilayer; the sequence is SLTDSFADTLASIINFI. Positions 47, 51, 70, 73, and 77 each coordinate Zn(2+). The Cytoplasmic portion of the chain corresponds to 61–83; sequence AIRYAIVPADHDHRYGHGKAEPL. Residues 84-105 traverse the membrane as a helical segment; that stretch reads AALAQSAFIMGSAFLLLFYGGE. At 106–119 the chain is on the periplasmic side; that stretch reads RLLNPSPVENATLG. The helical transmembrane segment at 120-138 threads the bilayer; that stretch reads VVVSVVAIVLTLALVLLQK. At 139–145 the chain is on the cytoplasmic side; sequence RALAATN. Residues 146–160 traverse the membrane as a helical segment; that stretch reads STVVEADSLHYKSDL. Zn(2+) contacts are provided by His155 and Asp159. The Periplasmic portion of the chain corresponds to 161–180; that stretch reads FLNAAVLLALVLSQYGWWWA. Residues 181-200 form a helical membrane-spanning segment; that stretch reads DGLFAVLIACYIGQQAFDLG. Residues 201–296 lie on the Cytoplasmic side of the membrane; the sequence is YRSIQALLDR…DPVQVEPTTQ (96 aa). Residues His234, Asp235, His250, His263, His285, and Asp287 each contribute to the Zn(2+) site.

Belongs to the cation diffusion facilitator (CDF) transporter (TC 2.A.4) family. FieF subfamily. Homodimer. The subunits are held together in a parallel orientation through zinc binding at the interface of the cytoplasmic domains.

The protein localises to the cell inner membrane. The catalysed reaction is Zn(2+)(in) + H(+)(out) = Zn(2+)(out) + H(+)(in). The enzyme catalyses Cd(2+)(in) + H(+)(out) = Cd(2+)(out) + H(+)(in). It carries out the reaction Fe(2+)(in) + H(+)(out) = Fe(2+)(out) + H(+)(in). Its activity is regulated as follows. Cytoplasmic zinc binding may trigger movements of two electrically repulsive cytoplasmic domains and reorient transmembrane helices, thereby modulating coordination geometry of the active site for zinc transport. It may modulate activity in response to cytoplasmic metal fluctuations. Functionally, divalent metal cation transporter which exports Zn(2+), Cd(2+) and possibly Fe(2+). Zn(2+)/H(+) antiporter capable of using the proton motive force to remove Zn(2+) from the cytoplasm. May be involved in zinc and iron detoxification by efflux. The chain is Cation-efflux pump FieF from Shewanella oneidensis (strain ATCC 700550 / JCM 31522 / CIP 106686 / LMG 19005 / NCIMB 14063 / MR-1).